Here is a 145-residue protein sequence, read N- to C-terminus: Functional amyloid chaperone FapA (145 aa).

Positions 1 to 27 (MRKRDKRLYHLLLVGCVLGSLSLTAQA) are cleaved as a signal peptide.

It belongs to the FapA family. In terms of assembly, monomer in solution. Interacts with FapC but not FapB in vitro.

The protein resides in the periplasm. Its function is as follows. An intrinsically disordered chaperone for fibril amyloid FapC that guards against fibrillation, pro within the periplasm. Upon overexpression of the endogenous six-gene locus (fapA-fapF), cells form large clumps during liquid growth, make large amounts of biofilm and produce relatively unstable amyloid fibrils. This chain is Functional amyloid chaperone FapA, found in Pseudomonas putida (strain ATCC 700007 / DSM 6899 / JCM 31910 / BCRC 17059 / LMG 24140 / F1).